An 821-amino-acid polypeptide reads, in one-letter code: Probable E3 ubiquitin-protein ligase hulA (821 aa).

The region spanning 1 to 112 (MGSNLPAQPN…QMGGDEMLTR (112 aa)) is the C2 domain. 2 disordered regions span residues 140 to 240 (PNQA…WERR) and 255 to 359 (RTTT…YFVD). 4 stretches are compositionally biased toward polar residues: residues 151–173 (AQSSTSSGLVPQVSSASHPSVSP), 181–201 (AASNVSLHPQRVPSTTRPTST), 217–228 (QGSRTNLSSFED), and 255–272 (RTTTWTRPSSNYNEQTQR). The WW 1 domain maps to 231–264 (GRLPAGWERREDNLGRTYYVDHNTRTTTWTRPSS). The segment covering 281 to 296 (LERRAHQSRMLPEDRT) has biased composition (basic and acidic residues). Polar residues predominate over residues 297-306 (GANSPNLQES). The segment covering 311–339 (PQQAHTPPAGGSASAVSMMATGATTAGTG) has biased composition (low complexity). WW domains are found at residues 339–372 (GELPPGWEQRTTPEGRPYFVDHNTRTTTWVDPRR) and 399–432 (GPLPSGWEMRLTNTARVYFVDHNTKTTTWDDPRL). The region spanning 488-821 (SASDLKKRLM…VEETLGFGQE (334 aa)) is the HECT domain. The active-site Glycyl thioester intermediate is Cys-789.

It belongs to the RSP5/NEDD4 family. In terms of assembly, interacts with creD.

Its subcellular location is the cytoplasm. It catalyses the reaction S-ubiquitinyl-[E2 ubiquitin-conjugating enzyme]-L-cysteine + [acceptor protein]-L-lysine = [E2 ubiquitin-conjugating enzyme]-L-cysteine + N(6)-ubiquitinyl-[acceptor protein]-L-lysine.. It participates in protein modification; protein ubiquitination. Its function is as follows. E3 ubiquitin-protein ligase which accepts ubiquitin from an E2 ubiquitin-conjugating enzyme in the form of a thioester and then directly transfers the ubiquitin to targeted substrates. Probably involved in the regulatory network controlling carbon source utilization. The sequence is that of Probable E3 ubiquitin-protein ligase hulA (hulA) from Aspergillus niger (strain ATCC MYA-4892 / CBS 513.88 / FGSC A1513).